The primary structure comprises 447 residues: Elongation factor 1-alpha (447 aa).

The region spanning 5–230 (KVHINIVVIG…DNINEPKRPS (226 aa)) is the tr-type G domain. The tract at residues 14 to 21 (GHVDSGKS) is G1. 14–21 (GHVDSGKS) contacts GTP. An N6,N6-dimethyllysine modification is found at lysine 55. Residues 70–74 (GITID) are G2. Lysine 79 carries the post-translational modification N6,N6,N6-trimethyllysine. The G3 stretch occupies residues 91-94 (DAPG). Residues 91–95 (DAPGH) and 153–156 (NKMD) each bind GTP. The segment at 153–156 (NKMD) is G4. Lysine 187 carries the N6,N6,N6-trimethyllysine modification. The tract at residues 194 to 196 (SGF) is G5. Lysine 261 carries the post-translational modification N6-methyllysine. The residue at position 289 (glutamate 289) is a 5-glutamyl glycerylphosphorylethanolamine. Residue lysine 306 is modified to N6,N6,N6-trimethyllysine. The residue at position 362 (glutamate 362) is a 5-glutamyl glycerylphosphorylethanolamine. An N6,N6,N6-trimethyllysine modification is found at lysine 396.

Belongs to the TRAFAC class translation factor GTPase superfamily. Classic translation factor GTPase family. EF-Tu/EF-1A subfamily.

The protein localises to the cytoplasm. This protein promotes the GTP-dependent binding of aminoacyl-tRNA to the A-site of ribosomes during protein biosynthesis. This Pisum sativum (Garden pea) protein is Elongation factor 1-alpha.